Consider the following 282-residue polypeptide: Protein-export membrane protein SecF (282 aa).

Helical transmembrane passes span 9 to 29, 120 to 140, 149 to 169, 174 to 194, 214 to 234, and 236 to 256; these read IAIP…KGIP, EGFK…YLYF, IILS…LLGI, ATIA…ILLT, KTGL…LIVV, and LFIP…LALI.

The protein belongs to the SecD/SecF family. SecF subfamily. As to quaternary structure, part of the protein translocation apparatus. Forms a complex with SecD.

It is found in the cell membrane. Functionally, involved in protein export. This Methanocaldococcus jannaschii (strain ATCC 43067 / DSM 2661 / JAL-1 / JCM 10045 / NBRC 100440) (Methanococcus jannaschii) protein is Protein-export membrane protein SecF.